A 169-amino-acid polypeptide reads, in one-letter code: Ureidoglycolate lyase (169 aa).

This sequence belongs to the ureidoglycolate lyase family. In terms of assembly, homodimer. Ni(2+) is required as a cofactor.

It catalyses the reaction (S)-ureidoglycolate = urea + glyoxylate. It functions in the pathway nitrogen metabolism; (S)-allantoin degradation. In terms of biological role, catalyzes the catabolism of the allantoin degradation intermediate (S)-ureidoglycolate, generating urea and glyoxylate. Involved in the utilization of allantoin as nitrogen source. The sequence is that of Ureidoglycolate lyase from Pseudomonas aeruginosa (strain LESB58).